A 116-amino-acid chain; its full sequence is Ferredoxin-like protein in nif region (116 aa).

One can recognise a 4Fe-4S ferredoxin-type domain in the interval 2–29; the sequence is AYTITSQCISCKLCSSVCPTGAIKIAEN. Positions 9, 12, 15, and 19 each coordinate iron-sulfur cluster.

This is Ferredoxin-like protein in nif region (fdxN) from Nostoc sp. (strain PCC 7120 / SAG 25.82 / UTEX 2576).